The primary structure comprises 991 residues: Translation initiation factor IF-2 (991 aa).

Disordered stretches follow at residues 126 to 220 (QADH…DVGE) and 325 to 359 (VKAAGDGDTAPAADDALAGKKKPGKKKKKPDVDEK). Polar residues-rich tracts occupy residues 138–160 (QTESAVQTESAVQTESAVQTEPA) and 201–210 (PAAQTESAVQ). Over residues 326-340 (KAAGDGDTAPAADDA) the composition is skewed to low complexity. Over residues 343 to 353 (GKKKPGKKKKK) the composition is skewed to basic residues. The tr-type G domain maps to 488–658 (IRPPVVTIMG…LTEAEIRELK (171 aa)). A G1 region spans residues 497-504 (GHVDHGKT). 497-504 (GHVDHGKT) is a binding site for GTP. Residues 522–526 (GITQH) are G2. The segment at 544 to 547 (DTPG) is G3. GTP-binding positions include 544–548 (DTPGH) and 598–601 (NKID). A G4 region spans residues 598-601 (NKID). The interval 634–636 (SAK) is G5.

This sequence belongs to the TRAFAC class translation factor GTPase superfamily. Classic translation factor GTPase family. IF-2 subfamily.

Its subcellular location is the cytoplasm. Its function is as follows. One of the essential components for the initiation of protein synthesis. Protects formylmethionyl-tRNA from spontaneous hydrolysis and promotes its binding to the 30S ribosomal subunits. Also involved in the hydrolysis of GTP during the formation of the 70S ribosomal complex. The chain is Translation initiation factor IF-2 from Chlorobium phaeobacteroides (strain DSM 266 / SMG 266 / 2430).